We begin with the raw amino-acid sequence, 359 residues long: Guanine nucleotide-binding protein alpha-4 subunit (359 aa).

Glycine 2 carries N-myristoyl glycine lipidation. The S-palmitoyl cysteine moiety is linked to residue cysteine 3. Residues 31 to 359 (TEVKLLLLGA…RYNLKDCGLF (329 aa)) form the G-alpha domain. Positions 34-47 (KLLLLGAGESGKST) are G1 motif. Residues 39–46 (GAGESGKS), 178–184 (LRARVKS), 203–207 (DVGGQ), 272–275 (NKMD), and alanine 331 contribute to the GTP site. Serine 46 is a Mg(2+) binding site. A G2 motif region spans residues 176-184 (DILRARVKS). A G3 motif region spans residues 199–208 (FRMFDVGGQR). The G4 motif stretch occupies residues 268–275 (ILFLNKMD). The G5 motif stretch occupies residues 329 to 334 (TCATDT).

This sequence belongs to the G-alpha family. G(i/o/t/z) subfamily. G proteins are composed of 3 units; alpha, beta and gamma. The alpha chain contains the guanine nucleotide binding site.

Guanine nucleotide-binding proteins (G proteins) are involved as modulators or transducers in various transmembrane signaling systems. The polypeptide is Guanine nucleotide-binding protein alpha-4 subunit (gpa-4) (Caenorhabditis briggsae).